A 123-amino-acid chain; its full sequence is MLNQRQQYGRQGEQAAERFLKKEGYTIVCRNYRTPVGEIDIIAKDKTTLAFVEVKARRTESYGSPRLSITKDKQRKITRAALWYLKDTGQAGARARFDVVIVQGRDNSVELIRNAFDANLAAS.

The protein belongs to the UPF0102 family.

The protein is UPF0102 protein Dole_2298 of Desulfosudis oleivorans (strain DSM 6200 / JCM 39069 / Hxd3) (Desulfococcus oleovorans).